The primary structure comprises 300 residues: Ribosomal RNA small subunit methyltransferase H (300 aa).

Residues 46-48 (GGH), aspartate 65, phenylalanine 92, aspartate 107, and glutamine 114 each bind S-adenosyl-L-methionine.

This sequence belongs to the methyltransferase superfamily. RsmH family.

Its subcellular location is the cytoplasm. It catalyses the reaction cytidine(1402) in 16S rRNA + S-adenosyl-L-methionine = N(4)-methylcytidine(1402) in 16S rRNA + S-adenosyl-L-homocysteine + H(+). Functionally, specifically methylates the N4 position of cytidine in position 1402 (C1402) of 16S rRNA. This Prochlorococcus marinus (strain MIT 9215) protein is Ribosomal RNA small subunit methyltransferase H.